Reading from the N-terminus, the 1228-residue chain is DNA-directed RNA polymerase subunit beta (1228 aa).

It belongs to the RNA polymerase beta chain family. As to quaternary structure, the RNAP catalytic core consists of 2 alpha, 1 beta, 1 beta' and 1 omega subunit. When a sigma factor is associated with the core the holoenzyme is formed, which can initiate transcription.

It carries out the reaction RNA(n) + a ribonucleoside 5'-triphosphate = RNA(n+1) + diphosphate. DNA-dependent RNA polymerase catalyzes the transcription of DNA into RNA using the four ribonucleoside triphosphates as substrates. This chain is DNA-directed RNA polymerase subunit beta, found in Leptospira biflexa serovar Patoc (strain Patoc 1 / Ames).